A 1116-amino-acid chain; its full sequence is Eukaryotic translation initiation factor 2-alpha kinase 3 (1116 aa).

The first 29 residues, 1 to 29 (MERAISPGLLVRALLLLLLLLGLAARTVA), serve as a signal peptide directing secretion. Over 30-514 (AGRARGLPAP…HYNKNIRKKD (485 aa)) the chain is Lumenal. Residues 77–101 (ALPAAAGEQEPRGPEPDDETELRPR) are disordered. An N-linked (GlcNAc...) asparagine glycan is attached at Asn-258. The chain crosses the membrane as a helical span at residues 515–535 (PVLLLHWWKEIVATILFCIIA). Topologically, residues 536–1116 (TTFIVRRLFH…NNSHSPLPSN (581 aa)) are cytoplasmic. Residues 550–571 (RQRKESETQCQTENKYDSVSGE) are disordered. The region spanning 593–1077 (FEPIQCLGRG…AINIIENAVF (485 aa)) is the Protein kinase domain. 599 to 607 (LGRGGFGVV) serves as a coordination point for ATP. Tyr-619 is subject to Phosphotyrosine; by autocatalysis. Position 622 (Lys-622) interacts with ATP. Residues 647–888 (EHPGIVRYFN…SPKVYLYIQM (242 aa)) are insert loop. Ser-715 carries the post-translational modification Phosphoserine. Thr-802 bears the Phosphothreonine mark. Residues 841–863 (KPTSSKSSSEATLSISPPRPTTL) form a disordered region. Over residues 844–856 (SSKSSSEATLSIS) the composition is skewed to low complexity. The active-site Proton acceptor is the Asp-937. Phosphothreonine is present on Thr-982. The segment at 1090–1116 (QRSRSLSSSGTKHSRQSNNSHSPLPSN) is disordered. Ser-1094 carries the phosphoserine modification. Residues 1105–1116 (QSNNSHSPLPSN) are compositionally biased toward polar residues.

The protein belongs to the protein kinase superfamily. Ser/Thr protein kinase family. GCN2 subfamily. As to quaternary structure, forms dimers with HSPA5/BIP in resting cells. Homotetramerizes in response to endoplasmic reticulum (ER) stress, leading to its activation. Interacts with HSP90B1/GRP94. Interacts with DNAJC3; inhibiting EIF2AK3/PERK activity. Interacts with ATAD3A; ATAD3A and EIF2S1/eIF-2-alpha occupy a common binding site within the cytoplasmic loop of EIF2AK3/PERK, leading to prevent EIF2AK3/PERK association with its substrate EIF2S1/eIF-2-alpha. Interacts with MFN2. Interacts with TMEM33. Interacts with PDIA6. Interacts with LACC1. Post-translationally, oligomerization of the N-terminal ER luminal domain by ER stress promotes EIF2AK3/PERK trans-autophosphorylation of the C-terminal cytoplasmic kinase domain at multiple residues including Thr-982 on the kinase activation loop. Autophosphorylated at Tyr-619 following endoplasmic reticulum stress, leading to activate its activity. Dephosphorylated at Tyr-619 by PTPN1/PTP1B, leading to inactivate its enzyme activity. Phosphorylation at Thr-802 by AKT (AKT1, AKT2 and/or AKT3) inactivates EIF2AK3/PERK. In terms of processing, ADP-ribosylated by PARP16 upon ER stress, which increases kinase activity. In terms of tissue distribution, ubiquitous. A high level expression is seen in secretory tissues.

Its subcellular location is the endoplasmic reticulum membrane. The catalysed reaction is L-seryl-[protein] + ATP = O-phospho-L-seryl-[protein] + ADP + H(+). It carries out the reaction L-threonyl-[protein] + ATP = O-phospho-L-threonyl-[protein] + ADP + H(+). The enzyme catalyses L-tyrosyl-[protein] + ATP = O-phospho-L-tyrosyl-[protein] + ADP + H(+). Its activity is regulated as follows. Inhibited by HSPA5/BIP in absence of stress. Perturbation in protein folding in the endoplasmic reticulum (ER) promotes reversible dissociation from HSPA5/BIP and oligomerization, resulting in trans-autophosphorylation and kinase activity induction. Inactivated following phosphorylation at Thr-802 by AKT (AKT1, AKT2 and/or AKT3). Inhibited by ATAD3A at mitochondria-endoplasmic reticulum contact sites, providing a safe haven for mitochondrial protein translation during ER stress. Its function is as follows. Metabolic-stress sensing protein kinase that phosphorylates the alpha subunit of eukaryotic translation initiation factor 2 (EIF2S1/eIF-2-alpha) in response to various stress, such as unfolded protein response (UPR). Key effector of the integrated stress response (ISR) to unfolded proteins: EIF2AK3/PERK specifically recognizes and binds misfolded proteins, leading to its activation and EIF2S1/eIF-2-alpha phosphorylation. EIF2S1/eIF-2-alpha phosphorylation in response to stress converts EIF2S1/eIF-2-alpha in a global protein synthesis inhibitor, leading to a global attenuation of cap-dependent translation, while concomitantly initiating the preferential translation of ISR-specific mRNAs, such as the transcriptional activators ATF4 and QRICH1, and hence allowing ATF4- and QRICH1-mediated reprogramming. The EIF2AK3/PERK-mediated unfolded protein response increases mitochondrial oxidative phosphorylation by promoting ATF4-mediated expression of COX7A2L/SCAF1, thereby increasing formation of respiratory chain supercomplexes. In contrast to most subcellular compartments, mitochondria are protected from the EIF2AK3/PERK-mediated unfolded protein response due to EIF2AK3/PERK inhibition by ATAD3A at mitochondria-endoplasmic reticulum contact sites. In addition to EIF2S1/eIF-2-alpha, also phosphorylates NFE2L2/NRF2 in response to stress, promoting release of NFE2L2/NRF2 from the BCR(KEAP1) complex, leading to nuclear accumulation and activation of NFE2L2/NRF2. Serves as a critical effector of unfolded protein response (UPR)-induced G1 growth arrest due to the loss of cyclin-D1 (CCND1). Involved in control of mitochondrial morphology and function. In Homo sapiens (Human), this protein is Eukaryotic translation initiation factor 2-alpha kinase 3.